Reading from the N-terminus, the 432-residue chain is UDP-N-acetylglucosamine 1-carboxyvinyltransferase (432 aa).

A phosphoenolpyruvate-binding site is contributed by lysine 22–asparagine 23. Arginine 92 is a UDP-N-acetyl-alpha-D-glucosamine binding site. The Proton donor role is filled by cysteine 116. Cysteine 116 carries the 2-(S-cysteinyl)pyruvic acid O-phosphothioketal modification. Residues arginine 121–glutamine 125, aspartate 307, and isoleucine 329 contribute to the UDP-N-acetyl-alpha-D-glucosamine site.

It belongs to the EPSP synthase family. MurA subfamily.

The protein resides in the cytoplasm. It carries out the reaction phosphoenolpyruvate + UDP-N-acetyl-alpha-D-glucosamine = UDP-N-acetyl-3-O-(1-carboxyvinyl)-alpha-D-glucosamine + phosphate. It functions in the pathway cell wall biogenesis; peptidoglycan biosynthesis. Its function is as follows. Cell wall formation. Adds enolpyruvyl to UDP-N-acetylglucosamine. The polypeptide is UDP-N-acetylglucosamine 1-carboxyvinyltransferase (Psychrobacter sp. (strain PRwf-1)).